Consider the following 341-residue polypeptide: DNA-directed RNA polymerase subunit alpha (341 aa).

The tract at residues 1 to 233 (MIQDEVPVSA…DLFLPFLHTE (233 aa)) is alpha N-terminal domain (alpha-NTD). The tract at residues 262 to 341 (DRMAKEVAFK…NLPRNKFSID (80 aa)) is alpha C-terminal domain (alpha-CTD).

The protein belongs to the RNA polymerase alpha chain family. As to quaternary structure, in plastids the minimal PEP RNA polymerase catalytic core is composed of four subunits: alpha, beta, beta', and beta''. When a (nuclear-encoded) sigma factor is associated with the core the holoenzyme is formed, which can initiate transcription.

Its subcellular location is the plastid. It localises to the chloroplast. It carries out the reaction RNA(n) + a ribonucleoside 5'-triphosphate = RNA(n+1) + diphosphate. Its function is as follows. DNA-dependent RNA polymerase catalyzes the transcription of DNA into RNA using the four ribonucleoside triphosphates as substrates. In Angiopteris evecta (Mule's foot fern), this protein is DNA-directed RNA polymerase subunit alpha.